The following is a 230-amino-acid chain: 7-cyano-7-deazaguanine synthase (230 aa).

14 to 24 (LSGGLDSTTTL) is a binding site for ATP. Residues Cys-194, Cys-204, Cys-207, and Cys-210 each coordinate Zn(2+).

This sequence belongs to the QueC family. The cofactor is Zn(2+).

It catalyses the reaction 7-carboxy-7-deazaguanine + NH4(+) + ATP = 7-cyano-7-deazaguanine + ADP + phosphate + H2O + H(+). It participates in purine metabolism; 7-cyano-7-deazaguanine biosynthesis. Its function is as follows. Catalyzes the ATP-dependent conversion of 7-carboxy-7-deazaguanine (CDG) to 7-cyano-7-deazaguanine (preQ(0)). The chain is 7-cyano-7-deazaguanine synthase from Vesicomyosocius okutanii subsp. Calyptogena okutanii (strain HA).